Reading from the N-terminus, the 918-residue chain is Alpha-scruin (918 aa).

Kelch repeat units follow at residues 82 to 133 (VVLA…YFHR), 134 to 187 (RVYV…VMDE), 188 to 235 (RIFV…NNEG), 237 to 289 (IYVI…TQNK), 291 to 341 (IWIW…KTGA), and 342 to 390 (HVFI…AIPA). The interval 398–427 (EVPTSTPSSKAKPQPGSKPTSVKYKKQPDI) is disordered. Positions 430-459 (RNEAAKKVQRRWRRYIEQKSITKRMQQGDS) constitute an IQ domain. Kelch repeat units lie at residues 590–641 (VIIG…YYRS), 642–695 (AIYI…VFND), 696–743 (VLYA…AHGG), 745–795 (IWLL…VCDN), 797–849 (IWLC…ALES), and 851–898 (LYIA…TIPP).

As to expression, sperm.

Functionally, actin bundling protein found in the acrosomal sperm process. The protein is Alpha-scruin of Limulus polyphemus (Atlantic horseshoe crab).